Consider the following 227-residue polypeptide: Ribonuclease 3 (227 aa).

One can recognise an RNase III domain in the interval 4-133 (FETLEKLLGY…LIAAIYLDSN (130 aa)). E46 is a Mg(2+) binding site. D50 is an active-site residue. Mg(2+) is bound by residues N119 and E122. E122 is a catalytic residue. Residues 158–226 (DPKTALQEWA…ARDLLHRLQD (69 aa)) form the DRBM domain.

Belongs to the ribonuclease III family. Homodimer. Requires Mg(2+) as cofactor.

It localises to the cytoplasm. The enzyme catalyses Endonucleolytic cleavage to 5'-phosphomonoester.. In terms of biological role, digests double-stranded RNA. Involved in the processing of primary rRNA transcript to yield the immediate precursors to the large and small rRNAs (23S and 16S). Processes some mRNAs, and tRNAs when they are encoded in the rRNA operon. Processes pre-crRNA and tracrRNA of type II CRISPR loci if present in the organism. This Rickettsia akari (strain Hartford) protein is Ribonuclease 3.